The primary structure comprises 276 residues: Undecaprenyl-diphosphatase (276 aa).

Transmembrane regions (helical) follow at residues 84–104 (YRLGWYVIIGTIPICILGLFF), 115–135 (LWVVVTALVVFSGVIALAEYV), 188–208 (FGFLLAIPAVFASGLFSLPDA), 222–242 (QLLVATLIAFVLGLTAVAWLL), and 250–270 (MYWFVGYRVLVGTGMLVLLAT).

It belongs to the UppP family.

Its subcellular location is the cell membrane. It carries out the reaction di-trans,octa-cis-undecaprenyl diphosphate + H2O = di-trans,octa-cis-undecaprenyl phosphate + phosphate + H(+). Its function is as follows. Catalyzes the dephosphorylation of undecaprenyl diphosphate (UPP). Confers resistance to bacitracin. This is Undecaprenyl-diphosphatase from Mycobacterium tuberculosis (strain ATCC 25177 / H37Ra).